Reading from the N-terminus, the 198-residue chain is Recombination protein RecR (198 aa).

Residues 57 to 72 (CEKCNTFTEAQICEVC) form a C4-type zinc finger. The Toprim domain occupies 80 to 175 (TLLCVVETPA…AVTRLARGVP (96 aa)).

Belongs to the RecR family.

Its function is as follows. May play a role in DNA repair. It seems to be involved in an RecBC-independent recombinational process of DNA repair. It may act with RecF and RecO. The sequence is that of Recombination protein RecR from Burkholderia cenocepacia (strain HI2424).